Here is a 513-residue protein sequence, read N- to C-terminus: ATP synthase subunit alpha 1 (513 aa).

169–176 (GDRQTGKT) provides a ligand contact to ATP.

The protein belongs to the ATPase alpha/beta chains family. F-type ATPases have 2 components, CF(1) - the catalytic core - and CF(0) - the membrane proton channel. CF(1) has five subunits: alpha(3), beta(3), gamma(1), delta(1), epsilon(1). CF(0) has three main subunits: a(1), b(2) and c(9-12). The alpha and beta chains form an alternating ring which encloses part of the gamma chain. CF(1) is attached to CF(0) by a central stalk formed by the gamma and epsilon chains, while a peripheral stalk is formed by the delta and b chains.

It localises to the cell inner membrane. The catalysed reaction is ATP + H2O + 4 H(+)(in) = ADP + phosphate + 5 H(+)(out). Produces ATP from ADP in the presence of a proton gradient across the membrane. The alpha chain is a regulatory subunit. The polypeptide is ATP synthase subunit alpha 1 (Vibrio campbellii (strain ATCC BAA-1116)).